The following is a 962-amino-acid chain: Protein suppressor of underreplication (962 aa).

Disordered regions lie at residues 353 to 413 (EIVT…TRAA), 438 to 590 (TPTP…LSGS), 658 to 712 (NSSH…SPDL), 866 to 900 (QERT…TQAT), and 916 to 962 (QTSS…ELFK). Residues 372 to 382 (PRTKSKKKCSK) show a composition bias toward basic residues. Positions 386–395 (PCKEADLTDS) are enriched in basic and acidic residues. Polar residues-rich tracts occupy residues 438 to 448 (TPTPSGATTAI) and 480 to 489 (LTRSAESKIN). The span at 524–552 (VKQESKAKAKPEQKKKIKTVDKPAQETPK) shows a compositional bias: basic and acidic residues. Basic residues predominate over residues 553 to 562 (RKPGRPRKCK). Over residues 564–576 (LTETLGKSKTKPN) the composition is skewed to polar residues. The span at 673 to 683 (RRTKALKRKRK) shows a compositional bias: basic residues. Composition is skewed to polar residues over residues 703 to 712 (RSATNKSPDL) and 866 to 880 (QERT…NSIV). Over residues 885-894 (KSPKSPKHGA) the composition is skewed to basic residues. Positions 916–944 (QTSSVESVSAPSTPVNPSTSAAACQTRTA) are enriched in polar residues. The segment covering 953–962 (TKRKRLELFK) has biased composition (basic residues).

Its subcellular location is the nucleus. The protein resides in the chromosome. Required for underreplication of DNA, which is found in many late replicating euchromatic regions of salivary gland polytene chromosomes. Controls chromatin organization in polytene chromosomes. This is Protein suppressor of underreplication (SuUR) from Drosophila erecta (Fruit fly).